Consider the following 204-residue polypeptide: Peptidyl-tRNA hydrolase (204 aa).

Residue Tyr-19 coordinates tRNA. The active-site Proton acceptor is the His-24. Residues Tyr-70, Asn-72, and Asn-118 each coordinate tRNA.

This sequence belongs to the PTH family. Monomer.

The protein localises to the cytoplasm. It carries out the reaction an N-acyl-L-alpha-aminoacyl-tRNA + H2O = an N-acyl-L-amino acid + a tRNA + H(+). Functionally, hydrolyzes ribosome-free peptidyl-tRNAs (with 1 or more amino acids incorporated), which drop off the ribosome during protein synthesis, or as a result of ribosome stalling. In terms of biological role, catalyzes the release of premature peptidyl moieties from peptidyl-tRNA molecules trapped in stalled 50S ribosomal subunits, and thus maintains levels of free tRNAs and 50S ribosomes. The polypeptide is Peptidyl-tRNA hydrolase (Prochlorococcus marinus (strain SARG / CCMP1375 / SS120)).